A 101-amino-acid chain; its full sequence is Small ribosomal subunit protein bS18c (101 aa).

It belongs to the bacterial ribosomal protein bS18 family. Part of the 30S ribosomal subunit.

It is found in the plastid. It localises to the chloroplast. This Gossypium barbadense (Sea Island cotton) protein is Small ribosomal subunit protein bS18c.